Consider the following 137-residue polypeptide: GEL complex subunit OPTI (137 aa).

Residues 1 to 44 (MSGGRRKEEPPQPQLANGALKVSVWSKVLRSDAAWEDKDEFLDV) lie on the Cytoplasmic side of the membrane. Residues 45-65 (IYWFRQIIAVVLGVIWGVLPL) form a helical membrane-spanning segment. Residue Arg66 is a topological domain, lumenal. The chain crosses the membrane as a helical span at residues 67–84 (GFLGIAGFCLINAGVLYL). The Cytoplasmic segment spans residues 85-103 (YFSNYLQIDEEEYGGTWEL). A helical transmembrane segment spans residues 104-127 (TKEGFMTSFALFMVCVADSFTTGH). Topologically, residues 128–137 (LDHLLHCHPL) are lumenal.

The protein belongs to the EMC6 family. Component of the GET- and EMC-like (GEL) complex, composed of RAB5IF/OPTI and TMCO1. The GEL complex is part of the multi-pass translocon (MPT) complex, composed of three subcomplexes, the GEL complex (composed of RAB5IF/OPTI and TMCO1), the BOS complex (composed of NCLN/Nicalin, NOMO and TMEM147) and the PAT complex (composed of WDR83OS/Asterix and CCDC47). The MPT complex associates with the SEC61 complex. Interacts with NDUFS3, NDUFA4, NDUFV1, NDUFA9 and NDUFS8 of the mitochondrial membrane respiratory chain NADH dehydrogenase (Complex I). Interacts with UQCRC2 of the ubiquinol-cytochrome c reductase complex (Complex III). Interacts with COX5A and COX7C of the cytochrome c oxidase complex (Complex IV). Expressed in embryonic stem cells and differentiated neuronal cells.

It localises to the endoplasmic reticulum membrane. It is found in the mitochondrion inner membrane. Its function is as follows. Component of the multi-pass translocon (MPT) complex that mediates insertion of multi-pass membrane proteins into the lipid bilayer of membranes. The MPT complex takes over after the SEC61 complex: following membrane insertion of the first few transmembrane segments of proteins by the SEC61 complex, the MPT complex occludes the lateral gate of the SEC61 complex to promote insertion of subsequent transmembrane regions. Within the MPT complex, the GEL subcomplex may mediate insertion of transmembrane regions into the membrane. In addition to its role in multi-pass membrane insertion, RAB5IF/OPTI also acts as an assembly factor for mitochondrial respiratory complexes. The polypeptide is GEL complex subunit OPTI (Homo sapiens (Human)).